The chain runs to 4753 residues: Dynein heavy chain domain-containing protein 1 (4753 aa).

Coiled-coil stretches lie at residues 826–858 and 936–991; these read IHAIAQCTQKLNEANEQYVELEERMEYVRALHE and KLQQ…LSEL. The interval 2688–2766 is disordered; that stretch reads HLGKDHQESE…SRGMKESISH (79 aa). Acidic residues predominate over residues 2695-2712; that stretch reads ESEEEEEEERVPEVESEG. Positions 2740-2751 are enriched in polar residues; the sequence is RVSNSRDPSLTP. Coiled coils occupy residues 3125 to 3227, 3590 to 3651, and 4431 to 4460; these read LQQQ…MSKA, MRNQ…QGSK, and GAQLAERRLRQRLVQVNRRLESLQDLLTHV. Positions 3580–3657 are disordered; that stretch reads ALTEGRGKGL…QGSKPAYETQ (78 aa). The segment covering 3602–3615 has biased composition (acidic residues); sequence KEEDDESEESNEAE. A compositionally biased stretch (basic and acidic residues) spans 3616–3631; it reads DQTKEQKAEERKNEQE. The span at 3632 to 3641 shows a compositional bias: acidic residues; that stretch reads KEQEENEEKE. The disordered stretch occupies residues 4669 to 4697; it reads ALQDSPSSQPSPLPPVSISTQAPGTSDLP.

This sequence belongs to the dynein heavy chain family. In terms of tissue distribution, expressed in spermatozoa (at protein level).

The protein resides in the cell projection. The protein localises to the cilium. It localises to the flagellum. Functionally, essential for the normal assembly and function of sperm flagella axonemes. This is Dynein heavy chain domain-containing protein 1 (DNHD1) from Homo sapiens (Human).